We begin with the raw amino-acid sequence, 753 residues long: Polyadenylate-binding protein, cytoplasmic and nuclear (753 aa).

The segment covering methionine 1 to serine 43 has biased composition (low complexity). Residues methionine 1–serine 49 are disordered. RRM domains follow at residues alanine 48 to arginine 126, glycine 136 to serine 213, threonine 229 to lysine 306, and valine 332 to arginine 460. 3 disordered regions span residues valine 363–lysine 417, arginine 607–glycine 649, and glycine 727–serine 753. A compositionally biased stretch (basic and acidic residues) spans aspartate 376–lysine 417. Over residues arginine 607–proline 619 the composition is skewed to gly residues. The segment covering glutamine 633–glycine 649 has biased composition (low complexity). The PABC domain maps to alanine 647–lysine 724. Positions proline 737–serine 753 are enriched in basic and acidic residues.

Belongs to the polyadenylate-binding protein type-1 family.

It is found in the cytoplasm. The protein resides in the nucleus. In terms of biological role, binds the poly(A) tail of mRNA. Appears to be an important mediator of the multiple roles of the poly(A) tail in mRNA biogenesis, stability and translation. In the nucleus, involved in both mRNA cleavage and polyadenylation. Is also required for efficient mRNA export to the cytoplasm. Acts in concert with a poly(A)-specific nuclease (PAN) to affect poly(A) tail shortening, which may occur concomitantly with either nucleocytoplasmic mRNA transport or translational initiation. In the cytoplasm, stimulates translation initiation and regulates mRNA decay through translation termination-coupled poly(A) shortening, probably mediated by PAN. The sequence is that of Polyadenylate-binding protein, cytoplasmic and nuclear (pab1) from Aspergillus terreus (strain NIH 2624 / FGSC A1156).